The primary structure comprises 1422 residues: DNA-directed RNA polymerase subunit beta (1422 aa).

A disordered region spans residues glutamine 1392–alanine 1422.

This sequence belongs to the RNA polymerase beta chain family. The RNAP catalytic core consists of 2 alpha, 1 beta, 1 beta' and 1 omega subunit. When a sigma factor is associated with the core the holoenzyme is formed, which can initiate transcription.

It carries out the reaction RNA(n) + a ribonucleoside 5'-triphosphate = RNA(n+1) + diphosphate. Functionally, DNA-dependent RNA polymerase catalyzes the transcription of DNA into RNA using the four ribonucleoside triphosphates as substrates. The chain is DNA-directed RNA polymerase subunit beta from Anaeromyxobacter dehalogenans (strain 2CP-C).